Reading from the N-terminus, the 322-residue chain is Myeloid-associated differentiation marker (322 aa).

The disordered stretch occupies residues 1–25; the sequence is MPVTVTRTTITTTTTSSSGQGSPTI. Residue Ser22 is modified to Phosphoserine. 2 consecutive MARVEL domains span residues 31-163 and 168-319; these read ALTQ…ARPG and YMAT…HLVF. The next 8 helical transmembrane spans lie at 41–61, 70–90, 101–121, 137–157, 171–191, 203–223, 239–259, and 294–314; these read LLQL…GAWT, FTWC…LCGL, FPIT…IIYP, AIAA…EVAW, TVPG…FAFI, LEWC…AILL, FLSG…VLWP, and LAVA…LVHS.

It belongs to the MAL family.

It is found in the membrane. In Pongo abelii (Sumatran orangutan), this protein is Myeloid-associated differentiation marker (MYADM).